The following is a 381-amino-acid chain: Putative glutamate--cysteine ligase 2 (381 aa).

Belongs to the glutamate--cysteine ligase type 2 family. YbdK subfamily.

The catalysed reaction is L-cysteine + L-glutamate + ATP = gamma-L-glutamyl-L-cysteine + ADP + phosphate + H(+). Its function is as follows. ATP-dependent carboxylate-amine ligase which exhibits weak glutamate--cysteine ligase activity. This Polaromonas naphthalenivorans (strain CJ2) protein is Putative glutamate--cysteine ligase 2.